The following is a 976-amino-acid chain: 5'-3' exoribonuclease 2 homolog (976 aa).

The segment at 264-281 (RACELCGQYGHELKECRG) adopts a CCHC-type zinc-finger fold. Over residues 411–420 (DEERFKENQK) the composition is skewed to basic and acidic residues. The disordered stretch occupies residues 411-442 (DEERFKENQKNKKARMQQYGRGRGGRGRGRGQ). Residues 535–788 (DIRLYESGWK…GICVLYEDPE (254 aa)) form an interaction with paxt-1 region. Positions 815–976 (WNERRDGRFN…GGYQGNSSWR (162 aa)) are disordered. Positions 856–866 (DRQGGNDNYRG) are enriched in low complexity.

Belongs to the 5'-3' exonuclease family. XRN2/RAT1 subfamily. As to quaternary structure, interacts with paxt-1 (via N-terminus); the interaction is direct and results in stabilization of xrn-2 in the complex.

It localises to the nucleus. Possesses 5'-&gt;3' exoribonuclease activity. Plays a role in maintenance of steady-state concentration and turnover of microRNAs (miRNA) by degradation of mature miRNA. Degradation role is enhanced when in complex with paxt-1. Partially redundant to xrn-1 in miRNA guide strand degradation. Implicated in differential regulation of mRNAs such as let-7 by controlling the accumulation of mature miRNA. Positively regulates molting of the pharyngeal cuticle. The protein is 5'-3' exoribonuclease 2 homolog of Caenorhabditis briggsae.